Here is a 286-residue protein sequence, read N- to C-terminus: Bifunctional protein FolD (286 aa).

Residues 164 to 166 (GAS), Ile-189, and Ile-230 each bind NADP(+).

This sequence belongs to the tetrahydrofolate dehydrogenase/cyclohydrolase family. Homodimer.

The catalysed reaction is (6R)-5,10-methylene-5,6,7,8-tetrahydrofolate + NADP(+) = (6R)-5,10-methenyltetrahydrofolate + NADPH. It catalyses the reaction (6R)-5,10-methenyltetrahydrofolate + H2O = (6R)-10-formyltetrahydrofolate + H(+). The protein operates within one-carbon metabolism; tetrahydrofolate interconversion. Its function is as follows. Catalyzes the oxidation of 5,10-methylenetetrahydrofolate to 5,10-methenyltetrahydrofolate and then the hydrolysis of 5,10-methenyltetrahydrofolate to 10-formyltetrahydrofolate. In Wolinella succinogenes (strain ATCC 29543 / DSM 1740 / CCUG 13145 / JCM 31913 / LMG 7466 / NCTC 11488 / FDC 602W) (Vibrio succinogenes), this protein is Bifunctional protein FolD.